Consider the following 88-residue polypeptide: ATP synthase F(0) complex subunit f, mitochondrial (88 aa).

Ala-2 bears the N-acetylalanine mark. Ser-3 carries the phosphoserine modification. Position 16 is an N6-acetyllysine (Lys-16). A helical membrane pass occupies residues 62 to 79 (MVLAAYVVFSYCISYKEL).

Belongs to the ATPase F chain family. Component of the ATP synthase complex composed at least of ATP5F1A/subunit alpha, ATP5F1B/subunit beta, ATP5MC1/subunit c (homooctomer), MT-ATP6/subunit a, MT-ATP8/subunit 8, ATP5ME/subunit e, ATP5MF/subunit f, ATP5MG/subunit g, ATP5MK/subunit k, ATP5MJ/subunit j, ATP5F1C/subunit gamma, ATP5F1D/subunit delta, ATP5F1E/subunit epsilon, ATP5PF/subunit F6, ATP5PB/subunit b, ATP5PD/subunit d, ATP5PO/subunit OSCP. ATP synthase complex consists of a soluble F(1) head domain (subunits alpha(3) and beta(3)) - the catalytic core - and a membrane F(0) domain - the membrane proton channel (subunits c, a, 8, e, f, g, k and j). These two domains are linked by a central stalk (subunits gamma, delta, and epsilon) rotating inside the F1 region and a stationary peripheral stalk (subunits F6, b, d, and OSCP).

The protein localises to the mitochondrion. It is found in the mitochondrion inner membrane. Its function is as follows. Subunit f, of the mitochondrial membrane ATP synthase complex (F(1)F(0) ATP synthase or Complex V) that produces ATP from ADP in the presence of a proton gradient across the membrane which is generated by electron transport complexes of the respiratory chain. ATP synthase complex consist of a soluble F(1) head domain - the catalytic core - and a membrane F(1) domain - the membrane proton channel. These two domains are linked by a central stalk rotating inside the F(1) region and a stationary peripheral stalk. During catalysis, ATP synthesis in the catalytic domain of F(1) is coupled via a rotary mechanism of the central stalk subunits to proton translocation. In vivo, can only synthesize ATP although its ATP hydrolase activity can be activated artificially in vitro. Part of the complex F(0) domain. In Mus musculus (Mouse), this protein is ATP synthase F(0) complex subunit f, mitochondrial.